The sequence spans 159 residues: D-aminoacyl-tRNA deacylase (159 aa).

The Gly-cisPro motif, important for rejection of L-amino acids motif lies at 146 to 147; the sequence is GP.

This sequence belongs to the DTD family. In terms of assembly, homodimer.

It localises to the cytoplasm. It carries out the reaction glycyl-tRNA(Ala) + H2O = tRNA(Ala) + glycine + H(+). The catalysed reaction is a D-aminoacyl-tRNA + H2O = a tRNA + a D-alpha-amino acid + H(+). Functionally, an aminoacyl-tRNA editing enzyme that deacylates mischarged D-aminoacyl-tRNAs. Also deacylates mischarged glycyl-tRNA(Ala), protecting cells against glycine mischarging by AlaRS. Acts via tRNA-based rather than protein-based catalysis; rejects L-amino acids rather than detecting D-amino acids in the active site. By recycling D-aminoacyl-tRNA to D-amino acids and free tRNA molecules, this enzyme counteracts the toxicity associated with the formation of D-aminoacyl-tRNA entities in vivo and helps enforce protein L-homochirality. The sequence is that of D-aminoacyl-tRNA deacylase from Bifidobacterium animalis subsp. lactis (strain AD011).